Reading from the N-terminus, the 499-residue chain is Probable cytosol aminopeptidase (499 aa).

Mn(2+) contacts are provided by lysine 269 and aspartate 274. Lysine 281 is an active-site residue. Aspartate 292, aspartate 351, and glutamate 353 together coordinate Mn(2+). Residue arginine 355 is part of the active site.

It belongs to the peptidase M17 family. Mn(2+) is required as a cofactor.

It is found in the cytoplasm. It carries out the reaction Release of an N-terminal amino acid, Xaa-|-Yaa-, in which Xaa is preferably Leu, but may be other amino acids including Pro although not Arg or Lys, and Yaa may be Pro. Amino acid amides and methyl esters are also readily hydrolyzed, but rates on arylamides are exceedingly low.. The enzyme catalyses Release of an N-terminal amino acid, preferentially leucine, but not glutamic or aspartic acids.. Its function is as follows. Presumably involved in the processing and regular turnover of intracellular proteins. Catalyzes the removal of unsubstituted N-terminal amino acids from various peptides. This is Probable cytosol aminopeptidase from Actinobacillus pleuropneumoniae serotype 5b (strain L20).